The chain runs to 476 residues: Alkaline phosphatase H (476 aa).

An N-terminal signal peptide occupies residues 1 to 26; it reads MTPGYPLALSLAVSMAVLGSALPAQA. Aspartate 77 is a binding site for Mg(2+). Residue aspartate 77 participates in Zn(2+) binding. Serine 128 acts as the Phosphoserine intermediate in catalysis. Position 128 is a phosphoserine (serine 128). The Mg(2+) site is built by aspartate 179 and threonine 181. Serine 206 is subject to Phosphoserine. Residue glutamine 346 participates in Mg(2+) binding. Residues aspartate 353, histidine 357, aspartate 395, histidine 396, and histidine 438 each contribute to the Zn(2+) site.

This sequence belongs to the alkaline phosphatase family. Mg(2+) serves as cofactor. Zn(2+) is required as a cofactor.

The protein localises to the secreted. It is found in the periplasm. The catalysed reaction is a phosphate monoester + H2O = an alcohol + phosphate. Functionally, has only phosphomonoesterase activity. This is Alkaline phosphatase H (phoA) from Pseudomonas aeruginosa (strain UCBPP-PA14).